Here is a 273-residue protein sequence, read N- to C-terminus: Large ribosomal subunit protein uL2 (273 aa).

Residues 221–263 (RGTAMNPVDHPHGGGEGRNFGKHPVTPWGVQTKGKKTRHNKRT) are disordered. The segment covering 253–263 (KGKKTRHNKRT) has biased composition (basic residues).

Belongs to the universal ribosomal protein uL2 family. As to quaternary structure, part of the 50S ribosomal subunit. Forms a bridge to the 30S subunit in the 70S ribosome.

One of the primary rRNA binding proteins. Required for association of the 30S and 50S subunits to form the 70S ribosome, for tRNA binding and peptide bond formation. It has been suggested to have peptidyltransferase activity; this is somewhat controversial. Makes several contacts with the 16S rRNA in the 70S ribosome. The protein is Large ribosomal subunit protein uL2 of Histophilus somni (strain 129Pt) (Haemophilus somnus).